The sequence spans 581 residues: Putative adenine deaminase BH0637 (581 aa).

The protein belongs to the metallo-dependent hydrolases superfamily. Adenine deaminase family.

The catalysed reaction is adenine + H2O + H(+) = hypoxanthine + NH4(+). The sequence is that of Putative adenine deaminase BH0637 from Halalkalibacterium halodurans (strain ATCC BAA-125 / DSM 18197 / FERM 7344 / JCM 9153 / C-125) (Bacillus halodurans).